Here is a 619-residue protein sequence, read N- to C-terminus: DNA mismatch repair protein MutL (619 aa).

It belongs to the DNA mismatch repair MutL/HexB family.

In terms of biological role, this protein is involved in the repair of mismatches in DNA. It is required for dam-dependent methyl-directed DNA mismatch repair. May act as a 'molecular matchmaker', a protein that promotes the formation of a stable complex between two or more DNA-binding proteins in an ATP-dependent manner without itself being part of a final effector complex. This is DNA mismatch repair protein MutL from Myxococcus xanthus (strain DK1622).